Consider the following 603-residue polypeptide: Pentatricopeptide repeat-containing protein At2g02980, chloroplastic (603 aa).

A chloroplast-targeting transit peptide spans M1–K38. PPR repeat units follow at residues D93–P127, D128–D162, N163–P193, C194–P228, N229–K263, Y264–K294, D295–P329, D330–P365, S366–M400, and H432–K466. The segment at L401–N476 is type E motif. The interval N477–K507 is type E(+) motif. Positions L508–W603 are type DYW motif.

It belongs to the PPR family. PCMP-H subfamily.

It localises to the plastid. Its subcellular location is the chloroplast. Functionally, involved in RNA editing event in chloroplasts. Required for the editing of a single site in ndhD transcript, which is a plastid-encoded subunits of the chloroplast NAD(P)H dehydrogenase (NDH) complex. Not essential for the activity of the NDH complex of the photosynthetic electron transport chain. This is Pentatricopeptide repeat-containing protein At2g02980, chloroplastic (PCMP-H26) from Arabidopsis thaliana (Mouse-ear cress).